We begin with the raw amino-acid sequence, 284 residues long: 2-dehydro-3-deoxyphosphooctonate aldolase (284 aa).

Belongs to the KdsA family.

Its subcellular location is the cytoplasm. The catalysed reaction is D-arabinose 5-phosphate + phosphoenolpyruvate + H2O = 3-deoxy-alpha-D-manno-2-octulosonate-8-phosphate + phosphate. It functions in the pathway carbohydrate biosynthesis; 3-deoxy-D-manno-octulosonate biosynthesis; 3-deoxy-D-manno-octulosonate from D-ribulose 5-phosphate: step 2/3. Its pathway is bacterial outer membrane biogenesis; lipopolysaccharide biosynthesis. The sequence is that of 2-dehydro-3-deoxyphosphooctonate aldolase from Citrobacter koseri (strain ATCC BAA-895 / CDC 4225-83 / SGSC4696).